Reading from the N-terminus, the 376-residue chain is Probable allantoicase (376 aa).

It belongs to the allantoicase family.

It catalyses the reaction allantoate + H2O = (S)-ureidoglycolate + urea. The protein operates within nitrogen metabolism; (S)-allantoin degradation; (S)-ureidoglycolate from allantoate (aminidohydrolase route): step 1/1. The chain is Probable allantoicase from Streptomyces coelicolor (strain ATCC BAA-471 / A3(2) / M145).